Here is a 362-residue protein sequence, read N- to C-terminus: tRNA-specific 2-thiouridylase MnmA 1 (362 aa).

ATP is bound by residues Ala-29–Ser-36 and Met-55. Cys-109 (nucleophile) is an active-site residue. A disulfide bond links Cys-109 and Cys-201. Gly-133 contributes to the ATP binding site. The interval Lys-151–Gln-153 is interaction with tRNA. The active-site Cysteine persulfide intermediate is the Cys-201.

The protein belongs to the MnmA/TRMU family.

Its subcellular location is the cytoplasm. The enzyme catalyses S-sulfanyl-L-cysteinyl-[protein] + uridine(34) in tRNA + AH2 + ATP = 2-thiouridine(34) in tRNA + L-cysteinyl-[protein] + A + AMP + diphosphate + H(+). Its function is as follows. Catalyzes the 2-thiolation of uridine at the wobble position (U34) of tRNA, leading to the formation of s(2)U34. The protein is tRNA-specific 2-thiouridylase MnmA 1 of Fusobacterium nucleatum subsp. nucleatum (strain ATCC 25586 / DSM 15643 / BCRC 10681 / CIP 101130 / JCM 8532 / KCTC 2640 / LMG 13131 / VPI 4355).